The chain runs to 178 residues: SsrA-binding protein (178 aa).

A disordered region spans residues Met1–Val28.

It belongs to the SmpB family.

The protein localises to the cytoplasm. Required for rescue of stalled ribosomes mediated by trans-translation. Binds to transfer-messenger RNA (tmRNA), required for stable association of tmRNA with ribosomes. tmRNA and SmpB together mimic tRNA shape, replacing the anticodon stem-loop with SmpB. tmRNA is encoded by the ssrA gene; the 2 termini fold to resemble tRNA(Ala) and it encodes a 'tag peptide', a short internal open reading frame. During trans-translation Ala-aminoacylated tmRNA acts like a tRNA, entering the A-site of stalled ribosomes, displacing the stalled mRNA. The ribosome then switches to translate the ORF on the tmRNA; the nascent peptide is terminated with the 'tag peptide' encoded by the tmRNA and targeted for degradation. The ribosome is freed to recommence translation, which seems to be the essential function of trans-translation. This Corynebacterium urealyticum (strain ATCC 43042 / DSM 7109) protein is SsrA-binding protein.